Consider the following 579-residue polypeptide: Zinc finger protein 248 (579 aa).

In terms of domain architecture, KRAB spans 8–79; it reads VSFKDVCVDF…EKGFPSQCHP (72 aa). The C2H2-type 1; degenerate zinc finger occupies 240-264; sequence TVCKYNECGRTFIESLKLNISQRPH. Residue lysine 341 forms a Glycyl lysine isopeptide (Lys-Gly) (interchain with G-Cter in SUMO2) linkage. C2H2-type zinc fingers lie at residues 380–402, 408–430, 436–458, 464–486, 492–514, 520–543, and 548–570; these read FECG…QRTH, YECT…QRTH, YECK…QRTH, YECN…QRTH, FICN…QRTH, YKCN…RTHT, and YECN…QRIH.

This sequence belongs to the krueppel C2H2-type zinc-finger protein family.

The protein localises to the nucleus. Functionally, may be involved in transcriptional regulation. The polypeptide is Zinc finger protein 248 (ZNF248) (Homo sapiens (Human)).